Reading from the N-terminus, the 1241-residue chain is ATP-dependent helicase/nuclease subunit A (1241 aa).

A UvrD-like helicase ATP-binding domain is found at 12–485 (SQWTDDQWKA…IDLAKNFRSR (474 aa)). 33-40 (AAAGSGKT) provides a ligand contact to ATP. The UvrD-like helicase C-terminal domain maps to 505 to 805 (GEIDYDADAE…RIMTIHKSKG (301 aa)).

It belongs to the helicase family. AddA subfamily. In terms of assembly, heterodimer of AddA and AddB/RexB. The cofactor is Mg(2+).

The catalysed reaction is Couples ATP hydrolysis with the unwinding of duplex DNA by translocating in the 3'-5' direction.. It carries out the reaction ATP + H2O = ADP + phosphate + H(+). Functionally, the heterodimer acts as both an ATP-dependent DNA helicase and an ATP-dependent, dual-direction single-stranded exonuclease. Recognizes the chi site generating a DNA molecule suitable for the initiation of homologous recombination. The AddA nuclease domain is required for chi fragment generation; this subunit has the helicase and 3' -&gt; 5' nuclease activities. This is ATP-dependent helicase/nuclease subunit A from Bacillus cereus (strain AH187).